The chain runs to 543 residues: MRHSLPYRMLRKRPMKLSTTVILMVSAVLFSVLLVVHLIYFSQISDMTRDGLANKALAVARTLADSPEIRQGLQKKPQESGIQAIAEAVRKRNDLLFIVVTDMQSLRYSHPEAQRIGQPFKGDDILKALNGEENVAINRGFLAQALRVFTPIYDENHKQIGVVAIGLELSRVTQQINDSRWSIIWSVLFGMLVGLIGTCILVKVLKKILFGLEPYEISTLFEQRQAMLQSIKEGVVAVDDRGEVTLINDAAQELLNYRKSQDDEKLSTLSHSWSQVVDVSEVLRDGTPRRDEEITIKDRLLLINTVPVRSNGVIIGAISTFRDKTEVRKLMQRLDGLVNYADALRERSHEFMNKLHVILGLLHLKSYKQLEDYILKTANNYQEEIGSLLGKIKSPVIAGFLISKINRATDLGHTLILNSESQLPDSGSEDQVATLITTLGNLIENALEALGPEPGGEISVTLHYRHGWLHCEVNDDGPGIAPDKIDHIFDKGVSTKGSERGVGLALVKQQVENLGGSIAVESEPGIFTQFFVQIPWDGERSNR.

Residues methionine 1–threonine 20 are Cytoplasmic-facing. Residues valine 21–phenylalanine 41 traverse the membrane as a helical segment. Topologically, residues serine 42–tryptophan 181 are periplasmic. Residues arginine 107–histidine 110, lysine 121, glycine 140–leucine 142, and arginine 147 each bind (R)-malate. Residues serine 182–valine 202 form a helical membrane-spanning segment. Over lysine 203–arginine 543 the chain is Cytoplasmic. One can recognise a PAS domain in the interval leucine 212–aspartate 323. One can recognise a Histidine kinase domain in the interval glutamate 346 to glycine 538. A Phosphohistidine; by autocatalysis modification is found at histidine 349.

Homodimer. Autophosphorylated. The phosphoryl group is rapidly transferred to DcuR.

The protein resides in the cell inner membrane. The enzyme catalyses ATP + protein L-histidine = ADP + protein N-phospho-L-histidine.. Member of the two-component regulatory system DcuR/DcuS. Involved in the C4-dicarboxylate-stimulated regulation of the genes encoding the anaerobic fumarate respiratory system (frdABCD; nuoAN; dcuB; sdhCDAB; etc.). Weakly regulates the aerobic C4-dicarboxylate transporter dctA. Activates DcuR by phosphorylation. The protein is Sensor histidine kinase DcuS (dcuS) of Escherichia coli O157:H7.